The following is a 243-amino-acid chain: Probable ubiquitin-conjugating enzyme E2 33 (243 aa).

One can recognise a UBC core domain in the interval 5-162 (ACIKRLQKEY…FPEYVEKYSQ (158 aa)). Cys-87 (glycyl thioester intermediate) is an active-site residue. The tract at residues 168–197 (EEAATQQTTTSENQDFPQKDNAKVESEKSV) is disordered. Over residues 184–197 (PQKDNAKVESEKSV) the composition is skewed to basic and acidic residues. A helical membrane pass occupies residues 220–240 (LPGWIVLLLVSIVGVVMALPL).

Belongs to the ubiquitin-conjugating enzyme family.

It localises to the membrane. It carries out the reaction S-ubiquitinyl-[E1 ubiquitin-activating enzyme]-L-cysteine + [E2 ubiquitin-conjugating enzyme]-L-cysteine = [E1 ubiquitin-activating enzyme]-L-cysteine + S-ubiquitinyl-[E2 ubiquitin-conjugating enzyme]-L-cysteine.. The protein operates within protein modification; protein ubiquitination. Functionally, accepts the ubiquitin from the E1 complex and catalyzes its covalent attachment to other proteins. The protein is Probable ubiquitin-conjugating enzyme E2 33 (UBC33) of Arabidopsis thaliana (Mouse-ear cress).